A 486-amino-acid chain; its full sequence is PTS system N-acetylmuramic acid-specific EIIBC component (486 aa).

Residues 1–89 (MAKITQTMIS…NKLIESVING (89 aa)) form the PTS EIIB type-1 domain. The Phosphocysteine intermediate; for EIIB activity role is filled by C28. The PTS EIIC type-1 domain maps to 127–486 (SKFATIFTPL…FFGSKDVDLS (360 aa)). 10 consecutive transmembrane segments (helical) span residues 129-149 (FATIFTPLIPGFIAAGLLLGF), 170-190 (LIAYMKVFGKGLFAFLSILIG), 196-216 (AFGGSGVNGAILASLFVLGYN), 230-250 (FFGYTIDPRGNIIGVLLAAII), 268-288 (MILTSVVTLLIMGVITFVVIM), 312-332 (AAILAGLFLISVVFGIHQGFV), 347-367 (LFPILAMAGGGQVGASLALYF), 381-401 (GAIIPGILGIGEPLIYGVTLP), 411-431 (IGGAAGGFFIGLVSYLGLPVG), and 453-473 (IFAGMAVFVVGLLISYVVGFL).

The protein resides in the cell inner membrane. It catalyses the reaction N-acetyl-beta-D-muramate(out) + N(pros)-phospho-L-histidyl-[protein] = N-acetyl-beta-D-muramate 6-phosphate(in) + L-histidyl-[protein]. In terms of biological role, the phosphoenolpyruvate-dependent sugar phosphotransferase system (sugar PTS), a major carbohydrate active transport system, catalyzes the phosphorylation of incoming sugar substrates concomitantly with their translocation across the cell membrane. This system is involved in N-acetylmuramic acid (MurNAc) transport, yielding cytoplasmic MurNAc-6-P. Is also able to take up anhydro-N-acetylmuramic acid (anhMurNAc), but cannot phosphorylate the carbon 6, probably because of the 1,6-anhydro ring. The polypeptide is PTS system N-acetylmuramic acid-specific EIIBC component (murP) (Vibrio vulnificus (strain CMCP6)).